The primary structure comprises 663 residues: Translation factor GUF1, mitochondrial (663 aa).

Residues 1-44 (MRGCLQSVRWLTTALRRPAPQLSCLPFQPFASTSRLFSSCASRA) constitute a mitochondrion transit peptide. The 181-residue stretch at 65-245 (ERFRNFCIVA…TIVEQIPAPV (181 aa)) folds into the tr-type G domain. GTP contacts are provided by residues 74 to 81 (AHVDHGKS), 138 to 142 (DTPGH), and 192 to 195 (NKVD).

It belongs to the TRAFAC class translation factor GTPase superfamily. Classic translation factor GTPase family. LepA subfamily.

The protein localises to the mitochondrion inner membrane. It catalyses the reaction GTP + H2O = GDP + phosphate + H(+). Its function is as follows. Promotes mitochondrial protein synthesis. May act as a fidelity factor of the translation reaction, by catalyzing a one-codon backward translocation of tRNAs on improperly translocated ribosomes. Binds to mitochondrial ribosomes in a GTP-dependent manner. This chain is Translation factor GUF1, mitochondrial, found in Coccidioides posadasii (strain C735) (Valley fever fungus).